The chain runs to 391 residues: UPF0229 protein CA_C0580 (391 aa).

Disordered regions lie at residues 1–20 (MAIF…TIGD) and 75–109 (VGSG…NSEG). Residues 96–106 (GSKGKGKGAGN) are compositionally biased toward gly residues.

This sequence belongs to the UPF0229 family.

This is UPF0229 protein CA_C0580 from Clostridium acetobutylicum (strain ATCC 824 / DSM 792 / JCM 1419 / IAM 19013 / LMG 5710 / NBRC 13948 / NRRL B-527 / VKM B-1787 / 2291 / W).